The chain runs to 102 residues: MTIPLYEVLILASILFAMGLACVVAWRANVIMMLIGIEIMLNAVMLTFVGGSAHWGIAEGQVFSLMIMALTSAEVSLALAMVAYLHRRKQSVDTDDFSSMKG.

3 helical membrane passes run 5 to 25, 30 to 50, and 62 to 82; these read LYEV…CVVA, VIMM…TFVG, and VFSL…LAMV.

Belongs to the complex I subunit 4L family. In terms of assembly, NDH-1 is composed of 14 different subunits. Subunits NuoA, H, J, K, L, M, N constitute the membrane sector of the complex.

The protein resides in the cell inner membrane. It catalyses the reaction a quinone + NADH + 5 H(+)(in) = a quinol + NAD(+) + 4 H(+)(out). In terms of biological role, NDH-1 shuttles electrons from NADH, via FMN and iron-sulfur (Fe-S) centers, to quinones in the respiratory chain. The immediate electron acceptor for the enzyme in this species is believed to be ubiquinone. Couples the redox reaction to proton translocation (for every two electrons transferred, four hydrogen ions are translocated across the cytoplasmic membrane), and thus conserves the redox energy in a proton gradient. The protein is NADH-quinone oxidoreductase subunit K 1 of Citrifermentans bemidjiense (strain ATCC BAA-1014 / DSM 16622 / JCM 12645 / Bem) (Geobacter bemidjiensis).